A 169-amino-acid chain; its full sequence is CRISPR system Cmr subunit Cmr5 (169 aa).

Belongs to the CRISPR system Cmr5 family. As to quaternary structure, monomer in isolation. Part of the type III-B Cmr ribonucleoprotein (RNP) complex, an elongated RNP with Cmr2 and Cmr3 as the base, with Cmr4 and Cmr5 forming a helical core along the mature crRNA (39 or 45 nt in length), while the complex is capped by Cmr6 and Cmr1. The 5' end of the crRNA is bound to Cmr2 and Cmr3, while Cmr6 and a Cmr1 subunit (Cmr1-1 or Cmr1-2) cap the 3' end of the crRNA. The target RNA lies antiparallel to the crRNA, with its 5' end near Cmr1 and Cmr6 and its 3' end near Cmr2 and Cmr3; major target cleavage occurs nears the junction of Cmr1/Cmr6 and Cmr4/Cmr, with minor cleavage occurring at 6 nt intervals which coincide with the proposed spacing of Cmr4 subunits. Interacts with Cmr4. Interacts with Cmr2, Cmr4 and Cmr6.

Its subcellular location is the cytoplasm. In terms of biological role, CRISPR (clustered regularly interspaced short palindromic repeat), is an adaptive immune system that provides protection against mobile genetic elements (viruses, transposable elements and conjugative plasmids). CRISPR clusters contain sequences complementary to antecedent mobile elements and target invading nucleic acids. CRISPR clusters are transcribed and processed into CRISPR RNA (crRNA), formerly called psiRNA (prokaryotic silencing) in this organism. Part of the Cmr ribonucleoprotein complex which has divalent cation-dependent endoribonuclease activity specific for ssRNA complementary to the crRNA (target NRA), generating 5' hydroxy- and 3' phosphate or 2'-3' cyclic phosphate termini. Cmr4 is probably the subunit that cleaves target RNA. Cmr complex does not cleave ssDNA complementary to the crRNA. Cleavage of invading RNA is guided by the crRNA; substrate cleavage occurs a fixed distance (14 nt) from the 3' end of the crRNA. In vitro reconstitution shows Cmr1-2 and Cmr5 are not absolutely necessary for target cleavage. This Pyrococcus furiosus (strain ATCC 43587 / DSM 3638 / JCM 8422 / Vc1) protein is CRISPR system Cmr subunit Cmr5.